The following is a 719-amino-acid chain: Polyribonucleotide nucleotidyltransferase (719 aa).

Residues Asp491 and Asp497 each coordinate Mg(2+). The 60-residue stretch at 558–617 folds into the KH domain; sequence PRMLTIKINPEKIRDVIGKGGATIRALTEETGTQIDISDDGTIVIASVDETQAKEAQRRI. In terms of domain architecture, S1 motif spans 627 to 695; the sequence is GQIYDGSVLR…DKGRLRLSIK (69 aa).

It belongs to the polyribonucleotide nucleotidyltransferase family. Requires Mg(2+) as cofactor.

It is found in the cytoplasm. It catalyses the reaction RNA(n+1) + phosphate = RNA(n) + a ribonucleoside 5'-diphosphate. In terms of biological role, involved in mRNA degradation. Catalyzes the phosphorolysis of single-stranded polyribonucleotides processively in the 3'- to 5'-direction. The protein is Polyribonucleotide nucleotidyltransferase of Bordetella bronchiseptica (strain ATCC BAA-588 / NCTC 13252 / RB50) (Alcaligenes bronchisepticus).